A 306-amino-acid chain; its full sequence is Ribonucleoside-diphosphate reductase small subunit (306 aa).

Aspartate 66, glutamate 96, and histidine 99 together coordinate Fe cation. Tyrosine 103 is a catalytic residue. Residues 153-173 traverse the membrane as a helical segment; that stretch reads ILMILIEGIFFVSSFAAIAYL. Glutamate 159, glutamate 193, and histidine 196 together coordinate Fe cation.

The protein belongs to the ribonucleoside diphosphate reductase small chain family. Heterotetramer composed of a homodimer of the large subunit (R1) and a homodimer of the small subunit (R2). Larger multisubunit protein complex are also active, composed of (R1)n(R2)n. Fe cation serves as cofactor.

The protein localises to the host membrane. It carries out the reaction a 2'-deoxyribonucleoside 5'-diphosphate + [thioredoxin]-disulfide + H2O = a ribonucleoside 5'-diphosphate + [thioredoxin]-dithiol. In terms of biological role, ribonucleoside-diphosphate reductase holoenzyme provides the precursors necessary for viral DNA synthesis. Allows virus growth in non-dividing cells, as well as reactivation from latency in infected hosts. Catalyzes the biosynthesis of deoxyribonucleotides from the corresponding ribonucleotides. The polypeptide is Ribonucleoside-diphosphate reductase small subunit (Varicella-zoster virus (strain Dumas) (HHV-3)).